We begin with the raw amino-acid sequence, 109 residues long: uncharacterized protein (109 aa).

The N-terminal stretch at 1–21 is a signal peptide; it reads MEKSICTSVLVLGLFISSAIG.

Prismatic layer of shell (at protein level). Expressed primarily in the mantle with highest level in the mantle edge and lower level in the mantle pallium.

The protein resides in the secreted. This is an uncharacterized protein from Margaritifera margaritifera (Freshwater pearl mussel).